The chain runs to 337 residues: Mannan polymerase complex subunit mnn9 (337 aa).

Residues 1–8 are Cytoplasmic-facing; it reads MRVYNKSR. The helical; Signal-anchor for type II membrane protein transmembrane segment at 9–29 threads the bilayer; sequence IVGQLLFVALGITFIYYLFTP. Residues 30 to 337 are Lumenal-facing; that stretch reads SVNSNAKVQI…PYYLVFHHNE (308 aa).

Belongs to the ANP1/MMN9/VAN1 family.

It localises to the endoplasmic reticulum membrane. Its subcellular location is the golgi apparatus membrane. It participates in protein modification; protein glycosylation. Functionally, required for the addition of the long alpha 1,6-mannose backbone of N-linked glycans on cell wall and periplasmic proteins. This is Mannan polymerase complex subunit mnn9 from Schizosaccharomyces pombe (strain 972 / ATCC 24843) (Fission yeast).